The following is a 384-amino-acid chain: Spermidine/putrescine import ATP-binding protein PotA (384 aa).

Residues 6-238 (ITFNNVSKTF…PINHFVANFI (233 aa)) enclose the ABC transporter domain. 40 to 47 (GASGSGKS) contributes to the ATP binding site.

It belongs to the ABC transporter superfamily. Spermidine/putrescine importer (TC 3.A.1.11.1) family. The complex is composed of two ATP-binding proteins (PotA), two transmembrane proteins (PotB and PotC) and a solute-binding protein (PotD).

The protein localises to the cell membrane. It catalyses the reaction ATP + H2O + polyamine-[polyamine-binding protein]Side 1 = ADP + phosphate + polyamineSide 2 + [polyamine-binding protein]Side 1.. Functionally, part of the ABC transporter complex PotABCD involved in spermidine/putrescine import. Responsible for energy coupling to the transport system. This Streptococcus pyogenes serotype M12 (strain MGAS2096) protein is Spermidine/putrescine import ATP-binding protein PotA.